The following is a 175-amino-acid chain: Cytidylate kinase (175 aa).

ATP is bound at residue 7–15 (GQPGSGKTS).

It belongs to the cytidylate kinase family. Type 2 subfamily.

Its subcellular location is the cytoplasm. The catalysed reaction is CMP + ATP = CDP + ADP. The enzyme catalyses dCMP + ATP = dCDP + ADP. This Methanocella arvoryzae (strain DSM 22066 / NBRC 105507 / MRE50) protein is Cytidylate kinase.